The primary structure comprises 382 residues: Beta-1,4-galactosyltransferase 6 (382 aa).

At 1–15 (MSALKRMMRVSNRSL) the chain is on the cytoplasmic side. A helical; Signal-anchor for type II membrane protein membrane pass occupies residues 16-35 (IAFIFFFSLSTSCLYFIYVA). Topologically, residues 36-382 (PGIANTYLFM…MPELAPVEDY (347 aa)) are lumenal. Residues Asn-71, Asn-75, Asn-83, Asn-84, Asn-99, and Asn-122 are each glycosylated (N-linked (GlcNAc...) asparagine). Cys-108 and Cys-152 form a disulfide bridge. UDP-alpha-D-galactose-binding positions include 163–167 (PFRNR), 202–204 (FNR), 229–230 (VD), Tyr-258, and Trp-290. Cysteines 223 and 242 form a disulfide. Residue Asp-230 coordinates Mn(2+). 292-295 (GEDD) is a binding site for N-acetyl-D-glucosamine. Asn-307 carries an N-linked (GlcNAc...) asparagine glycan. Position 323 (His-323) interacts with Mn(2+). 323–324 (HH) contacts UDP-alpha-D-galactose. N-acetyl-D-glucosamine is bound at residue Arg-334. An N-linked (GlcNAc...) asparagine glycan is attached at Asn-367.

It belongs to the glycosyltransferase 7 family. Requires Mn(2+) as cofactor. Mg(2+) is required as a cofactor. Ca(2+) serves as cofactor. In terms of tissue distribution, highest expression in brain with lower levels found in lungs, heart, skeletal muscle and kidney. Lowest expression in testis, liver and spleen.

It is found in the golgi apparatus. The protein localises to the golgi stack membrane. The catalysed reaction is a beta-D-glucosyl-(1&lt;-&gt;1')-N-acylsphing-4-enine + UDP-alpha-D-galactose = a beta-D-Gal-(1-&gt;4)-beta-D-Glc-(1&lt;-&gt;1)-Cer(d18:1(4E)) + UDP + H(+). It functions in the pathway protein modification; protein glycosylation. It participates in sphingolipid metabolism. With respect to regulation, inhibited by EDTA. In terms of biological role, catalyzes the synthesis of lactosylceramide (LacCer) via the transfer of galactose from UDP-galactose to glucosylceramide (GlcCer). LacCer is the starting point in the biosynthesis of all gangliosides (membrane-bound glycosphingolipids) which play pivotal roles in the CNS including neuronal maturation and axonal and myelin formation. This Rattus norvegicus (Rat) protein is Beta-1,4-galactosyltransferase 6.